A 139-amino-acid polypeptide reads, in one-letter code: Gastrula zinc finger protein XlCGF29.1 (139 aa).

5 consecutive C2H2-type zinc fingers follow at residues 6-28 (FTCTECEESFSLKSRLIAHLLIH), 34-56 (FDSTKCGKGFRRNQYLKEHLSTH), 62-84 (FVCTVCGKTYKYKHGLNTHLHSH), 90-112 (FPCSECRKIFSSKASLDIHLRHH), and 117-139 (FPCTECDKTFKQKKNLKRHQMIH).

Belongs to the krueppel C2H2-type zinc-finger protein family.

It localises to the nucleus. Functionally, may be involved in transcriptional regulation. In Xenopus laevis (African clawed frog), this protein is Gastrula zinc finger protein XlCGF29.1.